The sequence spans 306 residues: Homoserine O-acetyltransferase (306 aa).

Cys142 (acyl-thioester intermediate) is an active-site residue. Substrate is bound by residues Lys163 and Ser192. Catalysis depends on His235, which acts as the Proton acceptor. Glu237 is an active-site residue. Substrate is bound at residue Arg249.

Belongs to the MetA family.

The protein resides in the cytoplasm. The catalysed reaction is L-homoserine + acetyl-CoA = O-acetyl-L-homoserine + CoA. It functions in the pathway amino-acid biosynthesis; L-methionine biosynthesis via de novo pathway; O-acetyl-L-homoserine from L-homoserine: step 1/1. Its function is as follows. Transfers an acetyl group from acetyl-CoA to L-homoserine, forming acetyl-L-homoserine. The protein is Homoserine O-acetyltransferase of Brucella abortus (strain S19).